A 136-amino-acid chain; its full sequence is ATP synthase epsilon chain (136 aa).

The protein belongs to the ATPase epsilon chain family. As to quaternary structure, F-type ATPases have 2 components, CF(1) - the catalytic core - and CF(0) - the membrane proton channel. CF(1) has five subunits: alpha(3), beta(3), gamma(1), delta(1), epsilon(1). CF(0) has three main subunits: a, b and c.

The protein localises to the cellular thylakoid membrane. Its function is as follows. Produces ATP from ADP in the presence of a proton gradient across the membrane. The sequence is that of ATP synthase epsilon chain from Parasynechococcus marenigrum (strain WH8102).